The chain runs to 129 residues: Transcription antitermination protein NusB (129 aa).

Belongs to the NusB family.

Involved in transcription antitermination. Required for transcription of ribosomal RNA (rRNA) genes. Binds specifically to the boxA antiterminator sequence of the ribosomal RNA (rrn) operons. This Staphylococcus aureus (strain MRSA252) protein is Transcription antitermination protein NusB.